A 264-amino-acid chain; its full sequence is Thymidylate synthase (264 aa).

Arg21 serves as a coordination point for dUMP. His51 provides a ligand contact to (6R)-5,10-methylene-5,6,7,8-tetrahydrofolate. 126–127 (RR) serves as a coordination point for dUMP. Residue Cys146 is the Nucleophile of the active site. DUMP-binding positions include 166 to 169 (RSCD), Asn177, and 207 to 209 (HLY). Asp169 is a binding site for (6R)-5,10-methylene-5,6,7,8-tetrahydrofolate. Ala263 is a binding site for (6R)-5,10-methylene-5,6,7,8-tetrahydrofolate.

Belongs to the thymidylate synthase family. Bacterial-type ThyA subfamily. Homodimer.

Its subcellular location is the cytoplasm. It catalyses the reaction dUMP + (6R)-5,10-methylene-5,6,7,8-tetrahydrofolate = 7,8-dihydrofolate + dTMP. It functions in the pathway pyrimidine metabolism; dTTP biosynthesis. In terms of biological role, catalyzes the reductive methylation of 2'-deoxyuridine-5'-monophosphate (dUMP) to 2'-deoxythymidine-5'-monophosphate (dTMP) while utilizing 5,10-methylenetetrahydrofolate (mTHF) as the methyl donor and reductant in the reaction, yielding dihydrofolate (DHF) as a by-product. This enzymatic reaction provides an intracellular de novo source of dTMP, an essential precursor for DNA biosynthesis. The protein is Thymidylate synthase of Shewanella sp. (strain ANA-3).